We begin with the raw amino-acid sequence, 562 residues long: Potassium-transporting ATPase potassium-binding subunit (562 aa).

12 consecutive transmembrane segments (helical) span residues phenylalanine 6–phenylalanine 26, alanine 63–methionine 83, glycine 132–isoleucine 152, leucine 175–leucine 195, phenylalanine 253–valine 273, leucine 283–leucine 303, phenylalanine 327–valine 347, alanine 356–valine 376, glycine 379–glycine 399, methionine 416–leucine 436, leucine 483–isoleucine 503, and leucine 526–alanine 546.

The protein belongs to the KdpA family. As to quaternary structure, the system is composed of three essential subunits: KdpA, KdpB and KdpC.

It is found in the cell inner membrane. In terms of biological role, part of the high-affinity ATP-driven potassium transport (or Kdp) system, which catalyzes the hydrolysis of ATP coupled with the electrogenic transport of potassium into the cytoplasm. This subunit binds the periplasmic potassium ions and delivers the ions to the membrane domain of KdpB through an intramembrane tunnel. The sequence is that of Potassium-transporting ATPase potassium-binding subunit from Yersinia enterocolitica serotype O:8 / biotype 1B (strain NCTC 13174 / 8081).